Reading from the N-terminus, the 328-residue chain is MRIAVFGAGAWGTALALAFSARHDVVLWGRDAGHIDTLAATRHNERYLPGVPFPEELALTADFAAAARAADLHLVVTPLAGLRAAVGELNTLQPDTPLIWACKGLEAGTGKLPHEIVAEELGPAARCGVLTGPSFAAEVARAMPTAVTLAATDPAFARRWVPALHQPRLRIYANSDLVGAEIGGAIKNVLAIAAGVSDGMGFGLNARAALITRGLAEIARLAEALGGRPETLMGLAGMGDLILTCTGDLSRNRRVGLALAQGKTLAEILGELGHVAEGVSTAREVVKLAARHDVEMPLCEAVDTLLHDARLGPREVVEQLLSREPRRE.

Residues tryptophan 11, arginine 30, and lysine 103 each contribute to the NADPH site. The sn-glycerol 3-phosphate site is built by lysine 103, glycine 132, and serine 134. Alanine 136 serves as a coordination point for NADPH. Sn-glycerol 3-phosphate-binding residues include lysine 187, aspartate 240, serine 250, arginine 251, and asparagine 252. Catalysis depends on lysine 187, which acts as the Proton acceptor. Arginine 251 contacts NADPH. The NADPH site is built by valine 275 and glutamate 277.

Belongs to the NAD-dependent glycerol-3-phosphate dehydrogenase family.

The protein localises to the cytoplasm. It catalyses the reaction sn-glycerol 3-phosphate + NAD(+) = dihydroxyacetone phosphate + NADH + H(+). The enzyme catalyses sn-glycerol 3-phosphate + NADP(+) = dihydroxyacetone phosphate + NADPH + H(+). It participates in membrane lipid metabolism; glycerophospholipid metabolism. Catalyzes the reduction of the glycolytic intermediate dihydroxyacetone phosphate (DHAP) to sn-glycerol 3-phosphate (G3P), the key precursor for phospholipid synthesis. This is Glycerol-3-phosphate dehydrogenase [NAD(P)+] from Aromatoleum aromaticum (strain DSM 19018 / LMG 30748 / EbN1) (Azoarcus sp. (strain EbN1)).